The chain runs to 550 residues: Undecaprenyl phosphate-alpha-4-amino-4-deoxy-L-arabinose arabinosyl transferase 2 (550 aa).

11 consecutive transmembrane segments (helical) span residues 4–24 (LKPG…PLSF), 81–101 (FAVH…VYWL), 110–132 (WLGL…GTYA), 176–196 (FMTK…PWVI), 204–224 (VFIY…PWVI), 255–275 (APFW…LGLL), 288–308 (TQSG…FFSL), 313–333 (LPTY…RYAA), 348–368 (LLFG…WGLA), 381–401 (VLLG…TLRA), and 409–429 (AALC…QQVI).

This sequence belongs to the glycosyltransferase 83 family.

It localises to the cell inner membrane. The catalysed reaction is 4-amino-4-deoxy-alpha-L-arabinopyranosyl di-trans,octa-cis-undecaprenyl phosphate + lipid IVA = lipid IIA + di-trans,octa-cis-undecaprenyl phosphate.. The protein operates within lipopolysaccharide metabolism; 4-amino-4-deoxy-beta-L-arabinose-lipid A biosynthesis. Its function is as follows. Catalyzes the transfer of the L-Ara4N moiety of the glycolipid undecaprenyl phosphate-alpha-L-Ara4N to lipid A. The modified arabinose is attached to lipid A and is required for resistance to polymyxin and cationic antimicrobial peptides. This chain is Undecaprenyl phosphate-alpha-4-amino-4-deoxy-L-arabinose arabinosyl transferase 2, found in Sodalis glossinidius (strain morsitans).